Here is a 144-residue protein sequence, read N- to C-terminus: Large ribosomal subunit protein uL13 (144 aa).

This sequence belongs to the universal ribosomal protein uL13 family. In terms of assembly, part of the 50S ribosomal subunit.

This protein is one of the early assembly proteins of the 50S ribosomal subunit, although it is not seen to bind rRNA by itself. It is important during the early stages of 50S assembly. The chain is Large ribosomal subunit protein uL13 from Clostridium acetobutylicum (strain ATCC 824 / DSM 792 / JCM 1419 / IAM 19013 / LMG 5710 / NBRC 13948 / NRRL B-527 / VKM B-1787 / 2291 / W).